Here is a 348-residue protein sequence, read N- to C-terminus: E3 ubiquitin-protein ligase MARCHF9 (348 aa).

Positions 48 to 96 (ARDGDGDEEEYYGSEPRARGLAGDKEPRAGPPPPPAPPPPPPGALDALS) are disordered. The span at 63-75 (PRARGLAGDKEPR) shows a compositional bias: basic and acidic residues. Pro residues predominate over residues 76–90 (AGPPPPPAPPPPPPG). The RING-CH-type zinc-finger motif lies at 102-162 (DSGLRTPQCR…ELCYFKYQVL (61 aa)). Residues C110, C113, C126, C128, H136, C139, C152, and C155 each contribute to the Zn(2+) site. The next 2 membrane-spanning stretches (helical) occupy residues 185 to 205 (IAAIVLGSLFLVASISWLIWS) and 219 to 239 (LFQICYGMYGFMDVVCIGLIV). Disordered regions lie at residues 272-304 (GDTGGGAAGKPGPRTSRTSPPAGAPTRPPAAQR) and 328-348 (PPDARSSSHSGREVVMRVTTV).

As to quaternary structure, homodimer.

The protein resides in the golgi apparatus membrane. The protein localises to the lysosome membrane. The enzyme catalyses S-ubiquitinyl-[E2 ubiquitin-conjugating enzyme]-L-cysteine + [acceptor protein]-L-lysine = [E2 ubiquitin-conjugating enzyme]-L-cysteine + N(6)-ubiquitinyl-[acceptor protein]-L-lysine.. The protein operates within protein modification; protein ubiquitination. Its function is as follows. E3 ubiquitin-protein ligase that may mediate ubiquitination of MHC-I, CD4 and ICAM1, and promote their subsequent endocytosis and sorting to lysosomes via multivesicular bodies. E3 ubiquitin ligases accept ubiquitin from an E2 ubiquitin-conjugating enzyme in the form of a thioester and then directly transfer the ubiquitin to targeted substrates. The chain is E3 ubiquitin-protein ligase MARCHF9 (Marchf9) from Mus musculus (Mouse).